Consider the following 195-residue polypeptide: Probable GTP-binding protein EngB (195 aa).

In terms of domain architecture, EngB-type G spans 24–195 (DWPEIALAGR…EAWEAILRYL (172 aa)). GTP is bound by residues 32-39 (GRSNVGKS), 59-63 (GKTQL), 77-80 (DVPG), 144-147 (TKAD), and 176-178 (FSS). Serine 39 and threonine 61 together coordinate Mg(2+).

Belongs to the TRAFAC class TrmE-Era-EngA-EngB-Septin-like GTPase superfamily. EngB GTPase family. Requires Mg(2+) as cofactor.

In terms of biological role, necessary for normal cell division and for the maintenance of normal septation. The sequence is that of Probable GTP-binding protein EngB from Lactococcus lactis subsp. lactis (strain IL1403) (Streptococcus lactis).